The following is a 116-amino-acid chain: Nucleoid-associated protein P9215_00191 (116 aa).

The protein belongs to the YbaB/EbfC family. In terms of assembly, homodimer.

The protein resides in the cytoplasm. It is found in the nucleoid. Binds to DNA and alters its conformation. May be involved in regulation of gene expression, nucleoid organization and DNA protection. This Prochlorococcus marinus (strain MIT 9215) protein is Nucleoid-associated protein P9215_00191.